The primary structure comprises 1041 residues: Pre-mRNA-splicing factor ATP-dependent RNA helicase DHX16 (1041 aa).

2 disordered regions span residues 101–207 and 371–391; these read EDSE…AYEE and LQGD…QKES. Phosphoserine is present on residues S103, S106, and S107. The segment covering 119 to 130 has biased composition (basic residues); it reads QKKRKKRKHLRK. Position 160 is a phosphoserine (S160). Over residues 166-207 the composition is skewed to basic and acidic residues; the sequence is RTERERLQDLEERDAFAERVRQRDKDRTRNVLERSDKKAYEE. Residues 381 to 391 show a composition bias toward polar residues; the sequence is PTSTQAQQKES. One can recognise a Helicase ATP-binding domain in the interval 409–573; the sequence is LAAIANHQVL…FDDAPVFRIP (165 aa). Residue 422 to 429 coordinates ATP; it reads GETGSGKT. The DEAH box signature appears at 520–523; the sequence is DEAH. Residues 598-771 enclose the Helicase C-terminal domain; sequence SVLQIHVTQP…NVVLLLKSLG (174 aa). T712 carries the post-translational modification Phosphothreonine.

The protein belongs to the DEAD box helicase family. DEAH subfamily. DDX16/PRP8 sub-subfamily. In terms of assembly, component of pre-catalytic spliceosome complexes. Component of the minor spliceosome, which splices U12-type introns. Interacts with GPKOW. Interacts with TRIM6. Interacts with RIGI. As to expression, expressed in the spleen, thyroid and testis. Also expressed in the brain and cerebellum.

It localises to the nucleus. Its subcellular location is the nucleoplasm. The protein resides in the cytoplasm. The catalysed reaction is ATP + H2O = ADP + phosphate + H(+). Its function is as follows. Required for pre-mRNA splicing as a component of the spliceosome. Contributes to pre-mRNA splicing after spliceosome formation and prior to the first transesterification reaction. As a component of the minor spliceosome, involved in the splicing of U12-type introns in pre-mRNAs. Also plays a role in innate antiviral response by acting as a pattern recognition receptor sensing splicing signals in viral RNA. Mechanistically, TRIM6 promotes the interaction between unanchored 'Lys-48'-polyubiquitin chains and DHX16, leading to DHX16 interaction with RIGI and ssRNA to amplify RIGI-dependent innate antiviral immune responses. The sequence is that of Pre-mRNA-splicing factor ATP-dependent RNA helicase DHX16 (DHX16) from Homo sapiens (Human).